The sequence spans 683 residues: DNA-directed RNA polymerase subunit beta' (683 aa).

Residues C69, C71, C87, and C90 each contribute to the Zn(2+) site. Mg(2+) is bound by residues D489, D491, and D493.

Belongs to the RNA polymerase beta' chain family. RpoC1 subfamily. As to quaternary structure, in plastids the minimal PEP RNA polymerase catalytic core is composed of four subunits: alpha, beta, beta', and beta''. When a (nuclear-encoded) sigma factor is associated with the core the holoenzyme is formed, which can initiate transcription. Mg(2+) serves as cofactor. Zn(2+) is required as a cofactor.

It localises to the plastid. The protein resides in the chloroplast. It catalyses the reaction RNA(n) + a ribonucleoside 5'-triphosphate = RNA(n+1) + diphosphate. DNA-dependent RNA polymerase catalyzes the transcription of DNA into RNA using the four ribonucleoside triphosphates as substrates. The polypeptide is DNA-directed RNA polymerase subunit beta' (Triticum aestivum (Wheat)).